A 127-amino-acid polypeptide reads, in one-letter code: Fumarate reductase subunit C (127 aa).

The next 3 membrane-spanning stretches (helical) occupy residues 30 to 50, 58 to 78, and 107 to 127; these read ATVLPLILFTLFLTFGLGSLV, GWLSFMANPIVVGINIVALLG, and IIVLTQWAAVAFISLIVLMVV.

The protein belongs to the FrdC family. Part of an enzyme complex containing four subunits: a flavoprotein (FrdA), an iron-sulfur protein (FrdB), and two hydrophobic anchor proteins (FrdC and FrdD).

It localises to the cell inner membrane. Functionally, anchors the catalytic components of the fumarate reductase complex to the cell membrane, binds quinones. This is Fumarate reductase subunit C from Vibrio atlanticus (strain LGP32) (Vibrio splendidus (strain Mel32)).